The chain runs to 124 residues: Large ribosomal subunit protein bL12 (124 aa).

The protein belongs to the bacterial ribosomal protein bL12 family. In terms of assembly, homodimer. Part of the ribosomal stalk of the 50S ribosomal subunit. Forms a multimeric L10(L12)X complex, where L10 forms an elongated spine to which 2 to 4 L12 dimers bind in a sequential fashion. Binds GTP-bound translation factors.

In terms of biological role, forms part of the ribosomal stalk which helps the ribosome interact with GTP-bound translation factors. Is thus essential for accurate translation. The sequence is that of Large ribosomal subunit protein bL12 from Janthinobacterium sp. (strain Marseille) (Minibacterium massiliensis).